A 476-amino-acid chain; its full sequence is Bifunctional protein HldE (476 aa).

A ribokinase region spans residues 1-319 (MKITLPEYDK…ANAVYSQQEI (319 aa)). 196-199 (NLAE) serves as a coordination point for ATP. Asp-265 is an active-site residue. The cytidylyltransferase stretch occupies residues 345-476 (MTNGCFDILH…EIIKTIRNNS (132 aa)).

In the N-terminal section; belongs to the carbohydrate kinase PfkB family. This sequence in the C-terminal section; belongs to the cytidylyltransferase family. Homodimer.

The enzyme catalyses D-glycero-beta-D-manno-heptose 7-phosphate + ATP = D-glycero-beta-D-manno-heptose 1,7-bisphosphate + ADP + H(+). It carries out the reaction D-glycero-beta-D-manno-heptose 1-phosphate + ATP + H(+) = ADP-D-glycero-beta-D-manno-heptose + diphosphate. It participates in nucleotide-sugar biosynthesis; ADP-L-glycero-beta-D-manno-heptose biosynthesis; ADP-L-glycero-beta-D-manno-heptose from D-glycero-beta-D-manno-heptose 7-phosphate: step 1/4. Its pathway is nucleotide-sugar biosynthesis; ADP-L-glycero-beta-D-manno-heptose biosynthesis; ADP-L-glycero-beta-D-manno-heptose from D-glycero-beta-D-manno-heptose 7-phosphate: step 3/4. Functionally, catalyzes the phosphorylation of D-glycero-D-manno-heptose 7-phosphate at the C-1 position to selectively form D-glycero-beta-D-manno-heptose-1,7-bisphosphate. Catalyzes the ADP transfer from ATP to D-glycero-beta-D-manno-heptose 1-phosphate, yielding ADP-D-glycero-beta-D-manno-heptose. In Psychromonas ingrahamii (strain DSM 17664 / CCUG 51855 / 37), this protein is Bifunctional protein HldE.